Here is a 194-residue protein sequence, read N- to C-terminus: MRKWILTRILPTPLYRPCFHLVCLVGTISLACNDMSPEQTATSVNCSSPERHTRSYDYMEGGDIRVRRLFCRTQWYLRIDKRGKVKGTQEMRNSYNIMEIMTVAVGIVAIKGVESEYYLAMNKQGELYAKKECNEDCNFKELILENHYNTSASAKWTHSGGEMFVALNQKGLPVKGKKTKKEQKTAHFLPMAIT.

Positions 1-31 (MRKWILTRILPTPLYRPCFHLVCLVGTISLA) are cleaved as a signal peptide. Residues Asn-45 and Asn-149 are each glycosylated (N-linked (GlcNAc...) asparagine).

Belongs to the heparin-binding growth factors family. As to quaternary structure, interacts with FGFBP1. Interacts with FGFR2. Affinity between fibroblast growth factors (FGFs) and their receptors is increased by heparan sulfate glycosaminoglycans that function as coreceptors.

Growth factor active on keratinocytes. Possible major paracrine effector of normal epithelial cell proliferation. In Rattus norvegicus (Rat), this protein is Fibroblast growth factor 7 (Fgf7).